A 156-amino-acid chain; its full sequence is SsrA-binding protein (156 aa).

A disordered region spans residues 127–156 (GKKKYDKREDLKKKDAKRDVDRAMRDRQKY). The segment covering 132–156 (DKREDLKKKDAKRDVDRAMRDRQKY) has biased composition (basic and acidic residues).

This sequence belongs to the SmpB family.

Its subcellular location is the cytoplasm. Required for rescue of stalled ribosomes mediated by trans-translation. Binds to transfer-messenger RNA (tmRNA), required for stable association of tmRNA with ribosomes. tmRNA and SmpB together mimic tRNA shape, replacing the anticodon stem-loop with SmpB. tmRNA is encoded by the ssrA gene; the 2 termini fold to resemble tRNA(Ala) and it encodes a 'tag peptide', a short internal open reading frame. During trans-translation Ala-aminoacylated tmRNA acts like a tRNA, entering the A-site of stalled ribosomes, displacing the stalled mRNA. The ribosome then switches to translate the ORF on the tmRNA; the nascent peptide is terminated with the 'tag peptide' encoded by the tmRNA and targeted for degradation. The ribosome is freed to recommence translation, which seems to be the essential function of trans-translation. The polypeptide is SsrA-binding protein (Exiguobacterium sp. (strain ATCC BAA-1283 / AT1b)).